A 237-amino-acid polypeptide reads, in one-letter code: uncharacterized protein (237 aa).

Positions 1-26 are disordered; it reads MKRIRDVLSHENSNNTNYSDTNDTDY. Residues 12 to 21 are compositionally biased toward low complexity; sequence NSNNTNYSDT.

It belongs to the mimivirus R160 family.

This is an uncharacterized protein from Acanthamoeba polyphaga mimivirus (APMV).